A 397-amino-acid chain; its full sequence is DnaJ homolog subfamily A member 1 (397 aa).

The region spanning 6–68 (TYYDVLGVKP…KKRELYDKGG (63 aa)) is the J domain. Residue K66 is modified to N6-acetyllysine. S83 carries the phosphoserine modification. Residues 121-205 (GATRKLALQK…CNGRKIVREK (85 aa)) form a CR-type zinc finger. The Zn(2+) site is built by C134, C137, C150, C153, C177, C180, C193, and C196. 4 CXXCXGXG motif repeats span residues 134–141 (CDKCEGRG), 150–157 (CPNCRGTG), 177–184 (CMECQGHG), and 193–200 (CKSCNGRK). A Phosphoserine modification is found at S335. The segment at 352 to 397 (VEETDEMDQVELVDFDPNQERRRHYNGEAYEDDEHHPRGGVQCQTS) is disordered. The span at 353–365 (EETDEMDQVELVD) shows a compositional bias: acidic residues. Y381 bears the Phosphotyrosine mark. At C394 the chain carries Cysteine methyl ester. C394 is lipidated: S-farnesyl cysteine. Positions 395–397 (QTS) are cleaved as a propeptide — removed in mature form.

As to quaternary structure, identified in a complex with HSPA1B and BAX. Interacts with RNF207.

It localises to the membrane. The protein localises to the cytoplasm. It is found in the microsome. Its subcellular location is the mitochondrion. The protein resides in the nucleus. It localises to the perinuclear region. Its function is as follows. Co-chaperone for HSPA8/Hsc70. Plays a role in protein transport into mitochondria via its role as co-chaperone. Stimulates ATP hydrolysis, but not the folding of unfolded proteins mediated by HSPA1A (in vitro). Promotes apoptosis in response to cellular stress mediated by exposure to anisomycin or UV. Functions as co-chaperone for HSPA1B and negatively regulates the translocation of BAX from the cytosol to mitochondria in response to cellular stress, thereby protecting cells against apoptosis. In Mus musculus (Mouse), this protein is DnaJ homolog subfamily A member 1 (Dnaja1).